The following is a 369-amino-acid chain: UPF0284 protein sll1500 (369 aa).

Belongs to the UPF0284 family.

This is UPF0284 protein sll1500 from Synechocystis sp. (strain ATCC 27184 / PCC 6803 / Kazusa).